Here is a 366-residue protein sequence, read N- to C-terminus: Isocitrate dehydrogenase [NAD] subunit alpha, mitochondrial (366 aa).

A mitochondrion-targeting transit peptide spans Met1 to Phe27. Lys77 bears the N6-succinyllysine mark. Position 101 is a phosphothreonine (Thr101). Residues Arg115, Arg125, and Arg146 each contribute to the substrate site. N6-acetyllysine is present on Lys223. Mg(2+) is bound by residues Asp233, Asp257, and Asp261. Position 343 is an N6-acetyllysine; alternate (Lys343). Lys343 bears the N6-succinyllysine; alternate mark. Lys350 carries the post-translational modification N6-succinyllysine.

It belongs to the isocitrate and isopropylmalate dehydrogenases family. In terms of assembly, heterooligomer of subunits alpha (IDH3A), beta (IDH3B), and gamma (IDH3G) in the apparent ratio of 2:1:1. The heterodimer containing one IDH3A and one IDH3B subunit and the heterodimer containing one IDH3A and one IDH3G subunit assemble into a heterotetramer (which contains two subunits of IDH3A, one of IDH3B and one of IDH3G) and further into the heterooctamer. The cofactor is Mg(2+). Requires Mn(2+) as cofactor.

The protein resides in the mitochondrion. The catalysed reaction is D-threo-isocitrate + NAD(+) = 2-oxoglutarate + CO2 + NADH. Its activity is regulated as follows. The heterotetramer and the heterodimer composed of IDH3A and IDH3G subunits can be allosterically activated by citrate (CIT) or/and ADP, and the two activators can act independently or synergistically. The heterodimer composed of IDH3A and IDH3B subunits cannot be allosterically regulated and the allosteric regulation of the heterotetramer is through the IDH3G subunit and not the IDH3B subunit. The IDH3G subunit contains the allosteric site which consists of a CIT-binding site and an ADP-binding site, and the binding of CIT and ADP causes conformational changes at the allosteric site which are transmitted to the active site in the catalytic subunit (IDH3A) through a cascade of conformational changes at the heterodimer interface, leading to stabilization of the isocitrate-binding at the active site and thus activation of the enzyme. ATP can activate the heterotetramer and the heterodimer composed of IDH3A and IDH3G subunits at low concentrations but inhibits their activities at high concentrations, whereas ATP exhibits only inhibitory effect on the heterodimer composed of IDH3A and IDH3B subunits. In terms of biological role, catalytic subunit of the enzyme which catalyzes the decarboxylation of isocitrate (ICT) into alpha-ketoglutarate. The heterodimer composed of the alpha (IDH3A) and beta (IDH3B) subunits and the heterodimer composed of the alpha (IDH3A) and gamma (IDH3G) subunits, have considerable basal activity but the full activity of the heterotetramer (containing two subunits of IDH3A, one of IDH3B and one of IDH3G) requires the assembly and cooperative function of both heterodimers. The chain is Isocitrate dehydrogenase [NAD] subunit alpha, mitochondrial from Homo sapiens (Human).